Here is a 434-residue protein sequence, read N- to C-terminus: GPI-anchor transamidase component PIGU (434 aa).

Residues Met-1–Ala-3 are Cytoplasmic-facing. The chain crosses the membrane as a helical span at residues Pro-4–Ser-22. Over Ser-23–Asp-78 the chain is Lumenal. A helical membrane pass occupies residues Tyr-79–Ile-99. The Cytoplasmic segment spans residues Gln-100–Ile-136. 4 consecutive transmembrane segments (helical) span residues Pro-137–Ser-157, Thr-158–Ser-177, Val-178–Leu-193, and Tyr-194–Leu-204. Residues Tyr-205 to Phe-221 lie on the Cytoplasmic side of the membrane. Lys-215 contributes to the a cardiolipin binding site. A helical transmembrane segment spans residues Trp-222–Ser-243. Residues Phe-244–Ser-285 lie on the Lumenal side of the membrane. Residues Leu-286–Ile-305 traverse the membrane as a helical segment. Residues Lys-306–His-310 are Cytoplasmic-facing. Lys-308 contributes to the a cardiolipin binding site. A run of 2 helical transmembrane segments spans residues Pro-311 to Thr-330 and Val-331 to Trp-344. Over Asn-345–Asn-353 the chain is Cytoplasmic. Residues Ile-354–Leu-371 traverse the membrane as a helical segment. The Lumenal segment spans residues Trp-372 to Ser-383. Positions 382 and 384 each coordinate a 2-acyl-6-[6-phosphoethanolamine-alpha-D-mannosyl-(1-&gt;2)-6-phosphoethanolamine-alpha-D-mannosyl-(1-&gt;6)-2-phosphoethanolamine-alpha-D-mannosyl-(1-&gt;4)-alpha-D-glucosaminyl]-1-(1-radyl,2-acyl-sn-glycero-3-phospho)-1D-myo-inositol. A helical transmembrane segment spans residues Asn-384–Phe-405. Residues Tyr-406–Lys-434 are Cytoplasmic-facing.

Belongs to the PIGU family. As to quaternary structure, heteropentamer. Part of the GPI-anchor transamidase complex, consisting of PIGK, PIGT, PIGS, PIGU and GAA1.

Its subcellular location is the endoplasmic reticulum membrane. Its pathway is glycolipid biosynthesis; glycosylphosphatidylinositol-anchor biosynthesis. Component of the glycosylphosphatidylinositol-anchor (GPI-anchor) transamidase (GPI-T) complex that catalyzes the formation of the linkage between a proprotein and a GPI-anchor and participates in GPI anchored protein biosynthesis. Binds the lipid portion of GPI-anchor. May act as an organizer in the transmembrane layer to recruit other subunits, and thus is essential for assembly of the complex. The chain is GPI-anchor transamidase component PIGU from Mus musculus (Mouse).